A 362-amino-acid chain; its full sequence is 3-dehydroquinate synthase (362 aa).

Residues 70–75, 104–108, 128–129, K141, K150, and 168–171 each bind NAD(+); these read DGEKYK, GVIGD, TT, and TLNT. Zn(2+) is bound by residues E183, H246, and H263.

This sequence belongs to the sugar phosphate cyclases superfamily. Dehydroquinate synthase family. Requires Co(2+) as cofactor. The cofactor is Zn(2+). It depends on NAD(+) as a cofactor.

The protein localises to the cytoplasm. The enzyme catalyses 7-phospho-2-dehydro-3-deoxy-D-arabino-heptonate = 3-dehydroquinate + phosphate. It participates in metabolic intermediate biosynthesis; chorismate biosynthesis; chorismate from D-erythrose 4-phosphate and phosphoenolpyruvate: step 2/7. Functionally, catalyzes the conversion of 3-deoxy-D-arabino-heptulosonate 7-phosphate (DAHP) to dehydroquinate (DHQ). The polypeptide is 3-dehydroquinate synthase (Haemophilus influenzae (strain 86-028NP)).